Here is a 210-residue protein sequence, read N- to C-terminus: Small ribosomal subunit protein uS3 (210 aa).

In terms of domain architecture, KH type-2 spans 38-106; the sequence is LKSFLKKRLY…EVYLNIQEVR (69 aa).

The protein belongs to the universal ribosomal protein uS3 family. In terms of assembly, part of the 30S ribosomal subunit. Forms a tight complex with proteins S10 and S14.

Functionally, binds the lower part of the 30S subunit head. Binds mRNA in the 70S ribosome, positioning it for translation. The polypeptide is Small ribosomal subunit protein uS3 (Geotalea daltonii (strain DSM 22248 / JCM 15807 / FRC-32) (Geobacter daltonii)).